The primary structure comprises 267 residues: 3-methyl-2-oxobutanoate hydroxymethyltransferase (267 aa).

Mg(2+) is bound by residues Asp45 and Asp84. 3-methyl-2-oxobutanoate is bound by residues Asp45–Ser46, Asp84, and Lys113. Glu115 is a binding site for Mg(2+). Glu182 (proton acceptor) is an active-site residue.

The protein belongs to the PanB family. Homodecamer; pentamer of dimers. Mg(2+) serves as cofactor.

It is found in the cytoplasm. The enzyme catalyses 3-methyl-2-oxobutanoate + (6R)-5,10-methylene-5,6,7,8-tetrahydrofolate + H2O = 2-dehydropantoate + (6S)-5,6,7,8-tetrahydrofolate. It participates in cofactor biosynthesis; coenzyme A biosynthesis. In terms of biological role, catalyzes the reversible reaction in which hydroxymethyl group from 5,10-methylenetetrahydrofolate is transferred onto alpha-ketoisovalerate to form ketopantoate. This is 3-methyl-2-oxobutanoate hydroxymethyltransferase from Saccharolobus islandicus (strain L.S.2.15 / Lassen #1) (Sulfolobus islandicus).